The chain runs to 177 residues: Large ribosomal subunit protein uL6 (177 aa).

The protein belongs to the universal ribosomal protein uL6 family. Part of the 50S ribosomal subunit.

Its function is as follows. This protein binds to the 23S rRNA, and is important in its secondary structure. It is located near the subunit interface in the base of the L7/L12 stalk, and near the tRNA binding site of the peptidyltransferase center. This chain is Large ribosomal subunit protein uL6, found in Rhizobium rhizogenes (strain K84 / ATCC BAA-868) (Agrobacterium radiobacter).